Here is a 242-residue protein sequence, read N- to C-terminus: Terpene cyclase dpfgB (242 aa).

Transmembrane regions (helical) follow at residues 15-37, 51-71, 75-95, 112-132, 141-161, 169-189, and 205-225; these read DVAW…NYVG, ALMA…IYPF, LEMY…YTAV, LPLI…ALAA, AWSA…QLLC, SYFL…QDIL, and LYIW…ICLW.

The protein belongs to the paxB family.

The protein resides in the membrane. The protein operates within secondary metabolite biosynthesis; terpenoid biosynthesis. In terms of biological role, terpene cyclase; part of the gene cluster that mediates the biosynthesis of diterpenoid pyrones. The first step of the pathway is the synthesis of the alpha-pyrone moiety by the polyketide synthase dpfgA via condensation of one acetyl-CoA starter unit with 3 malonyl-CoA units and 2 methylations. The alpha-pyrone is then combined with geranylgeranyl pyrophosphate (GGPP) formed by the GGPP synthase dpfgD through the action of the prenyltransferase dpfgC to yield a linear alpha-pyrone diterpenoid. Subsequent steps in the diterpenoid pyrone biosynthetic pathway involve the decalin core formation, which is initiated by the epoxidation of the C10-C11 olefin by the FAD-dependent oxidoreductase dpfgE, and is followed by a cyclization cascade catalyzed by the terpene cyclase dpfgB. The short chain dehydrogenase/reductase dpfgG then oxidizes the 8S hydroxy group to a ketone and the short chain dehydrogenase/reductase dpfgH reduces the ketone to the 8R hydroxy group to yield higginsianin B. Higginsianin B is further methylated by the methyltransferase dpfgI to produce the intermediate named FDDP B. The cytochrome P450 monooxygenase dfgpJ then catalyzes a three-step oxidation at C-27 to generate a carboxylic acid as well as C-26 hydroxylation. Finally, methyltransferase dpfgK methylates the carboxylic acid generated by dpfgJ, yielding the final diterpenoid pyrones from the pathway which were named FDDP D and FDDP E. The sequence is that of Terpene cyclase dpfgB from Gibberella zeae (strain ATCC MYA-4620 / CBS 123657 / FGSC 9075 / NRRL 31084 / PH-1) (Wheat head blight fungus).